Reading from the N-terminus, the 484-residue chain is tRNA-2-methylthio-N(6)-dimethylallyladenosine synthase (484 aa).

Residues 36–153 (GKLYIKTHGC…LPELIRARRE (118 aa)) enclose the MTTase N-terminal domain. Residues cysteine 45, cysteine 82, cysteine 116, cysteine 190, cysteine 194, and cysteine 197 each coordinate [4Fe-4S] cluster. Positions 176–415 (RAEGPSAFVS…HINAHAASIS (240 aa)) constitute a Radical SAM core domain. Residues 416–479 (QSMVGSVQRV…SNSLRGRIQL (64 aa)) enclose the TRAM domain. The tract at residues 428 to 450 (EGPSRRDPNELTGKSENMRPVNF) is disordered.

It belongs to the methylthiotransferase family. MiaB subfamily. As to quaternary structure, monomer. The cofactor is [4Fe-4S] cluster.

The protein localises to the cytoplasm. The enzyme catalyses N(6)-dimethylallyladenosine(37) in tRNA + (sulfur carrier)-SH + AH2 + 2 S-adenosyl-L-methionine = 2-methylsulfanyl-N(6)-dimethylallyladenosine(37) in tRNA + (sulfur carrier)-H + 5'-deoxyadenosine + L-methionine + A + S-adenosyl-L-homocysteine + 2 H(+). Functionally, catalyzes the methylthiolation of N6-(dimethylallyl)adenosine (i(6)A), leading to the formation of 2-methylthio-N6-(dimethylallyl)adenosine (ms(2)i(6)A) at position 37 in tRNAs that read codons beginning with uridine. The protein is tRNA-2-methylthio-N(6)-dimethylallyladenosine synthase of Xanthomonas euvesicatoria pv. vesicatoria (strain 85-10) (Xanthomonas campestris pv. vesicatoria).